A 500-amino-acid polypeptide reads, in one-letter code: tRNA modification GTPase MnmE (500 aa).

Residues Arg-24, Glu-120, and Lys-159 each coordinate (6S)-5-formyl-5,6,7,8-tetrahydrofolate. The region spanning 256–420 (GIPVAIIGET…LEKKLVQAAA (165 aa)) is the TrmE-type G domain. A K(+)-binding site is contributed by Asn-266. GTP contacts are provided by residues 266 to 271 (NAGKST), 285 to 291 (SDIHGTT), and 310 to 313 (DTAG). Position 270 (Ser-270) interacts with Mg(2+). Residues Ser-285, Ile-287, and Thr-290 each coordinate K(+). Thr-291 provides a ligand contact to Mg(2+). Lys-500 contacts (6S)-5-formyl-5,6,7,8-tetrahydrofolate.

It belongs to the TRAFAC class TrmE-Era-EngA-EngB-Septin-like GTPase superfamily. TrmE GTPase family. As to quaternary structure, homodimer. Heterotetramer of two MnmE and two MnmG subunits. K(+) is required as a cofactor.

It is found in the cytoplasm. Exhibits a very high intrinsic GTPase hydrolysis rate. Involved in the addition of a carboxymethylaminomethyl (cmnm) group at the wobble position (U34) of certain tRNAs, forming tRNA-cmnm(5)s(2)U34. This Phocaeicola vulgatus (strain ATCC 8482 / DSM 1447 / JCM 5826 / CCUG 4940 / NBRC 14291 / NCTC 11154) (Bacteroides vulgatus) protein is tRNA modification GTPase MnmE.